The following is a 1816-amino-acid chain: Kinesin-like protein KIF1B (1816 aa).

An N-acetylserine modification is found at Ser2. The 350-residue stretch at 5–354 (SVKVAVRVRP…LRYADRAKQI (350 aa)) folds into the Kinesin motor domain. Residue 97–104 (GQTGAGKS) coordinates ATP. The tract at residues 270-350 (NINKSLTTLG…TLSTLRYADR (81 aa)) is interaction with KIFBP. A coiled-coil region spans residues 365-386 (NAKLVRELKEEVTRLKDLLRAQ). The interval 431 to 450 (FSTASMGSLTSSPSSCSLSS) is disordered. Low complexity predominate over residues 432-450 (STASMGSLTSSPSSCSLSS). Residues 470-502 (GEEAIERLKESEKIIAELNETWEEKLRKTEAIR) are a coiled coil. Residues 556–612 (TRVGQADAERRQDIVLSGAHIKEEHCIFRSERSNSGEVIVTLEPCERSETYVNGKRV) form the FHA domain. Phosphothreonine is present on residues Thr647 and Thr652. Residues Gln663 and Glu665 each carry the phosphoserine modification. Coiled-coil stretches lie at residues 668–737 (EKQG…EEEV) and 841–869 (SLEKLKQRLDLMREMYDRAGEMASSAQDE). Ser1054 and Ser1057 each carry phosphoserine. A Phosphothreonine modification is found at Thr1075. Phosphoserine occurs at positions 1141, 1416, 1454, and 1487. The disordered stretch occupies residues 1550 to 1570 (STTTFESAITPSESSGYDSGD). The segment covering 1554–1566 (FESAITPSESSGY) has biased composition (polar residues). Residues Ser1573, Ser1603, Ser1610, and Ser1613 each carry the phosphoserine modification. The segment at 1617–1660 (RDPSESSFSSATLTPSSTCPSLVDSRSNSLDQKTPEANSRASSP) is disordered. Residues 1621–1634 (ESSFSSATLTPSST) are compositionally biased toward low complexity. A compositionally biased stretch (polar residues) spans 1640–1658 (DSRSNSLDQKTPEANSRAS). The PH domain maps to 1702 to 1799 (VSKKGYLHFK…WLYAFNPLLA (98 aa)).

It belongs to the TRAFAC class myosin-kinesin ATPase superfamily. Kinesin family. Unc-104 subfamily. As to quaternary structure, monomer. Interacts with KIFBP; positively regulates KIF1B microtubule motor activity. Interacts (via C-terminus end of the kinesin-motor domain) with CHP1; the interaction occurs in a calcium-dependent manner. In terms of assembly, interacts with MADD (via death domain); links this isoform to Rab3-carrying vesicles in anterograde synaptic vesicle transport. As to expression, isoform 3 is abundant in the skeletal muscle. It is also expressed in fetal brain, lung and kidney, and adult heart, placenta, testis, ovary and small intestine. Isoform 2 is abundant in the brain and also expressed in fetal heart, lung, liver and kidney, and adult skeletal muscle, placenta, liver, kidney, heart, spleen, thymus, prostate, testis, ovary, small intestine, colon and pancreas.

Its subcellular location is the cytoplasm. The protein resides in the cytoskeleton. It is found in the cytoplasmic vesicle. The protein localises to the secretory vesicle. It localises to the synaptic vesicle membrane. Its subcellular location is the mitochondrion. It carries out the reaction ATP + H2O + a kinesin associated with a microtubule at position (n) = ADP + phosphate a kinesin associated with a microtubule at position (n+1, toward the plus end).. Has a plus-end-directed microtubule motor activity and functions as a motor for transport of vesicles and organelles along microtubules. Its function is as follows. Has a plus-end-directed microtubule motor activity and functions as a motor for anterograde synaptic vesicle transport along axonal microtubules from the cell body to the presynapse in neuronal cells. Functions as a downstream effector in a developmental apoptotic pathway that is activated when nerve growth factor (NGF) becomes limiting for neuronal progenitor cells. In terms of biological role, has a plus-end-directed microtubule motor activity and functions as a motor for anterograde transport of mitochondria. The polypeptide is Kinesin-like protein KIF1B (Homo sapiens (Human)).